Here is a 625-residue protein sequence, read N- to C-terminus: Glyco-Gag protein (625 aa).

Topologically, residues leucine 1–arginine 66 are cytoplasmic. The helical transmembrane segment at leucine 67–serine 86 threads the bilayer. The Extracellular segment spans residues lysine 87–aspartate 625. A glycan (N-linked (GlcNAc...) asparagine; by host) is linked at asparagine 113. A disordered region spans residues proline 195–arginine 305. An N-linked (GlcNAc...) asparagine; by host glycan is attached at asparagine 479. Basic and acidic residues-rich tracts occupy residues glutamate 522–arginine 553 and arginine 573–lysine 606. The disordered stretch occupies residues glutamate 522–aspartate 625.

In terms of processing, glycosylated by host. Post-translationally, cleaved by host near the middle of the molecule, releasing the c-terminal half containing capsid and nucleoprotein domains op GAG.

The protein resides in the host cell membrane. Functionally, plays a role in viral particle release. Presumably acts by facilitating the fission of the virion bud at the cell surface. May prevent the antiviral activity of murine APOBEC3. In AKV murine leukemia virus (AKR (endogenous) murine leukemia virus), this protein is Glyco-Gag protein.